Here is a 610-residue protein sequence, read N- to C-terminus: Autophagy-related protein 22-1 (610 aa).

A disordered region spans residues 1-29; that stretch reads MIFTSTPPAPPPADAQQRQPRYPGEDTTP. Residues 41-61 form a helical membrane-spanning segment; the sequence is YGIAAEVFAVCGVGSFLPLTL. The N-linked (GlcNAc...) asparagine glycan is linked to N90. Transmembrane regions (helical) follow at residues 120-140, 153-173, and 177-197; these read SFAMYTFSLAVLVQALTLISF, LLLTFGLIGSVSSMLFVFISP, and ILGAILVVIGVTCLGSSFVVL. Residues 216-242 are disordered; that stretch reads KTEGEELPHLDSSGEYTRSGSFNRGDN. Over residues 229–239 the composition is skewed to polar residues; that stretch reads GEYTRSGSFNR. 4 consecutive transmembrane segments (helical) span residues 277–297, 310–330, 379–399, and 415–435; these read GVGLGYCAAVLVQVLSILLLF, TLPLRFVLLLVGIWWFSFTVV, VVIFLIAWFLLSDAMATVSGT, and VGLLSITATLSGMTGAFLWPV. An N-linked (GlcNAc...) asparagine glycan is attached at N445. Transmembrane regions (helical) follow at residues 450 to 470, 485 to 507, 527 to 547, and 550 to 570; these read LCIALFEIIPLYGMLAYIPLV, FPLGIVHGLVSGGLSSYCRSFFG, KGSSFIGPAVVGVLIDATGQV, and GFFFIAVLIVLPIPLIWMVNA. Residues 586–610 are disordered; sequence KSHGENSSEFGHPSEEAEGLLARNP. Residue N591 is glycosylated (N-linked (GlcNAc...) asparagine).

This sequence belongs to the ATG22 family.

The protein resides in the vacuole membrane. Functionally, vacuolar effluxer which mediate the efflux of amino acids resulting from autophagic degradation. The release of autophagic amino acids allows the maintenance of protein synthesis and viability during nitrogen starvation. This is Autophagy-related protein 22-1 (atg22-1) from Aspergillus clavatus (strain ATCC 1007 / CBS 513.65 / DSM 816 / NCTC 3887 / NRRL 1 / QM 1276 / 107).